The primary structure comprises 502 residues: MWTADEIAQLCYEHYGIRLPKKGKPEPNHEWTLLAAVVKIQSPADKACDTPDKPVQVTKEVVSMGTGTKCIGQSKMRKNGDILNDSHAEVIARRSFQRYLLHQLQLAATLKEDSIFVPGTQKGVWKLRRDLIFVFFSSHTPCGDASIIPMLEFEDQPCCPVFRNWAHNSSVEASSNLEAPGNERKCEDPDSPVTKKMRLEPGTAAREVTNGAAHHQSFGKQKSGPISPGIHSCDLTVEGLATVTRIAPGSAKVIDVYRTGAKCVPGEAGDSGKPGAAFHQVGLLRVKPGRGDRTRSMSCSDKMARWNVLGCQGALLMHLLEEPIYLSAVVIGKCPYSQEAMQRALIGRCQNVSALPKGFGVQELKILQSDLLFEQSRSAVQAKRADSPGRLVPCGAAISWSAVPEQPLDVTANGFPQGTTKKTIGSLQARSQISKVELFRSFQKLLSRIARDKWPHSLRVQKLDTYQEYKEAASSYQEAWSTLRKQVFGSWIRNPPDYHQFK.

Residues 63 to 501 (SMGTGTKCIG…IRNPPDYHQF (439 aa)) form the A to I editase domain. Zn(2+) is bound at residue H87. E89 (proton donor) is an active-site residue. R93 and R94 together coordinate 1D-myo-inositol hexakisphosphate. C142 is a binding site for Zn(2+). The segment at 174–194 (SSNLEAPGNERKCEDPDSPVT) is disordered. At S191 the chain carries Phosphoserine. C299 is a binding site for Zn(2+). Residues K302, R305, K435, and K470 each coordinate 1D-myo-inositol hexakisphosphate.

Belongs to the ADAT1 family. 1D-myo-inositol hexakisphosphate serves as cofactor. Ubiquitously expressed.

It catalyses the reaction adenosine(37) in tRNA(Ala) + H2O + H(+) = inosine(37) in tRNA(Ala) + NH4(+). In terms of biological role, specifically deaminates adenosine-37 to inosine in tRNA-Ala. The sequence is that of tRNA-specific adenosine deaminase 1 (ADAT1) from Homo sapiens (Human).